The following is a 484-amino-acid chain: NADH-quinone oxidoreductase subunit N (484 aa).

13 consecutive transmembrane segments (helical) span residues 10 to 30 (LALP…VDLF), 40 to 60 (FYLT…TQWG), 74 to 94 (SLGA…LAYT), 108 to 128 (FYLL…GGSL), 129 to 149 (LSLY…VAYH), 163 to 183 (FVLG…VYGA), 203 to 223 (LMLL…LGAA), 237 to 257 (PTPV…ALFM), 272 to 292 (EPML…IAIV), 299 to 319 (MLAY…TAGT), 327 to 347 (LFYT…ITVL), 370 to 390 (YAGV…TVGF), and 404 to 424 (GHIP…FYYL).

The protein belongs to the complex I subunit 2 family. NDH-1 is composed of 14 different subunits. Subunits NuoA, H, J, K, L, M, N constitute the membrane sector of the complex.

It is found in the cell inner membrane. It catalyses the reaction a quinone + NADH + 5 H(+)(in) = a quinol + NAD(+) + 4 H(+)(out). In terms of biological role, NDH-1 shuttles electrons from NADH, via FMN and iron-sulfur (Fe-S) centers, to quinones in the respiratory chain. The immediate electron acceptor for the enzyme in this species is believed to be ubiquinone. Couples the redox reaction to proton translocation (for every two electrons transferred, four hydrogen ions are translocated across the cytoplasmic membrane), and thus conserves the redox energy in a proton gradient. The chain is NADH-quinone oxidoreductase subunit N from Halorhodospira halophila (strain DSM 244 / SL1) (Ectothiorhodospira halophila (strain DSM 244 / SL1)).